The sequence spans 367 residues: 2-aminoethylphosphonate--pyruvate transaminase (367 aa).

K193 is modified (N6-(pyridoxal phosphate)lysine).

This sequence belongs to the class-V pyridoxal-phosphate-dependent aminotransferase family. PhnW subfamily. Homodimer. Requires pyridoxal 5'-phosphate as cofactor.

It carries out the reaction (2-aminoethyl)phosphonate + pyruvate = phosphonoacetaldehyde + L-alanine. Functionally, involved in phosphonate degradation. This Vibrio vulnificus (strain CMCP6) protein is 2-aminoethylphosphonate--pyruvate transaminase.